The sequence spans 252 residues: PHD finger protein ALFIN-LIKE 7 (252 aa).

Positions 141–193 (AKQSKDQSANHNSSRSKSSGGKPRHSESHTKASKMSPPPRKEDESGDEDEDDE) are disordered. The segment covering 149–161 (ANHNSSRSKSSGG) has biased composition (low complexity). The residue at position 176 (S176) is a Phosphoserine. A compositionally biased stretch (acidic residues) spans 184–193 (ESGDEDEDDE). Residues 195-247 (GAVCGACGDNYGGDEFWICCDACEKWFHGKCVKITPAKAEHIKHYKCPSCTTS) form a PHD-type zinc finger.

Belongs to the Alfin family. As to quaternary structure, interacts with H3K4me3 and to a lesser extent with H3K4me2. As to expression, ubiquitously expressed.

The protein localises to the nucleus. Histone-binding component that specifically recognizes H3 tails trimethylated on 'Lys-4' (H3K4me3), which mark transcription start sites of virtually all active genes. The polypeptide is PHD finger protein ALFIN-LIKE 7 (AL7) (Arabidopsis thaliana (Mouse-ear cress)).